A 56-amino-acid chain; its full sequence is Large ribosomal subunit protein bL32 (56 aa).

The interval Met1–Lys56 is disordered. Over residues Arg7–Lys20 the composition is skewed to basic residues. Positions Arg29–Met38 are enriched in basic and acidic residues.

This sequence belongs to the bacterial ribosomal protein bL32 family.

The polypeptide is Large ribosomal subunit protein bL32 (Listeria monocytogenes serotype 4a (strain HCC23)).